The sequence spans 271 residues: 3-methyl-2-oxobutanoate hydroxymethyltransferase (271 aa).

Asp-42 and Asp-86 together coordinate Mg(2+). Residues 42-43 (DS), Asp-86, and Lys-116 contribute to the 3-methyl-2-oxobutanoate site. Glu-118 serves as a coordination point for Mg(2+). Residue Glu-185 is the Proton acceptor of the active site.

This sequence belongs to the PanB family. In terms of assembly, homodecamer; pentamer of dimers. Requires Mg(2+) as cofactor.

It localises to the cytoplasm. The enzyme catalyses 3-methyl-2-oxobutanoate + (6R)-5,10-methylene-5,6,7,8-tetrahydrofolate + H2O = 2-dehydropantoate + (6S)-5,6,7,8-tetrahydrofolate. Its pathway is cofactor biosynthesis; (R)-pantothenate biosynthesis; (R)-pantoate from 3-methyl-2-oxobutanoate: step 1/2. Functionally, catalyzes the reversible reaction in which hydroxymethyl group from 5,10-methylenetetrahydrofolate is transferred onto alpha-ketoisovalerate to form ketopantoate. This chain is 3-methyl-2-oxobutanoate hydroxymethyltransferase, found in Synechococcus sp. (strain CC9605).